A 694-amino-acid chain; its full sequence is DNA-directed RNA polymerase subunit beta' (694 aa).

C69, C71, C87, and C90 together coordinate Zn(2+). Residues D489, D491, and D493 each coordinate Mg(2+).

The protein belongs to the RNA polymerase beta' chain family. RpoC1 subfamily. In plastids the minimal PEP RNA polymerase catalytic core is composed of four subunits: alpha, beta, beta', and beta''. When a (nuclear-encoded) sigma factor is associated with the core the holoenzyme is formed, which can initiate transcription. The cofactor is Mg(2+). Zn(2+) serves as cofactor.

It is found in the plastid. It localises to the chloroplast. It carries out the reaction RNA(n) + a ribonucleoside 5'-triphosphate = RNA(n+1) + diphosphate. Functionally, DNA-dependent RNA polymerase catalyzes the transcription of DNA into RNA using the four ribonucleoside triphosphates as substrates. The protein is DNA-directed RNA polymerase subunit beta' of Adiantum capillus-veneris (Maidenhair fern).